A 901-amino-acid polypeptide reads, in one-letter code: Protein translocase subunit SecA (901 aa).

ATP-binding positions include Q87, 105-109 (GEGKT), and D512. A disordered region spans residues 858–891 (SHQDDDTAAAAALAAQTGDRKVGRNDPCPCGSGK). Zn(2+) is bound by residues C885, C887, C896, and H897.

Belongs to the SecA family. In terms of assembly, monomer and homodimer. Part of the essential Sec protein translocation apparatus which comprises SecA, SecYEG and auxiliary proteins SecDF-YajC and YidC. Requires Zn(2+) as cofactor.

Its subcellular location is the cell inner membrane. It localises to the cytoplasm. It catalyses the reaction ATP + H2O + cellular proteinSide 1 = ADP + phosphate + cellular proteinSide 2.. Functionally, part of the Sec protein translocase complex. Interacts with the SecYEG preprotein conducting channel. Has a central role in coupling the hydrolysis of ATP to the transfer of proteins into and across the cell membrane, serving both as a receptor for the preprotein-SecB complex and as an ATP-driven molecular motor driving the stepwise translocation of polypeptide chains across the membrane. The sequence is that of Protein translocase subunit SecA from Escherichia fergusonii (strain ATCC 35469 / DSM 13698 / CCUG 18766 / IAM 14443 / JCM 21226 / LMG 7866 / NBRC 102419 / NCTC 12128 / CDC 0568-73).